The primary structure comprises 428 residues: D-amino acid dehydrogenase (428 aa).

Valine 3–tyrosine 17 provides a ligand contact to FAD.

The protein belongs to the DadA oxidoreductase family. FAD is required as a cofactor.

It carries out the reaction a D-alpha-amino acid + A + H2O = a 2-oxocarboxylate + AH2 + NH4(+). The protein operates within amino-acid degradation; D-alanine degradation; NH(3) and pyruvate from D-alanine: step 1/1. In terms of biological role, oxidative deamination of D-amino acids. This chain is D-amino acid dehydrogenase, found in Burkholderia ambifaria (strain MC40-6).